Reading from the N-terminus, the 638-residue chain is Chaperone protein DnaK (638 aa).

Position 198 is a phosphothreonine; by autocatalysis (Thr-198). Positions 602–638 (QAKSQAQGGEEAQAKDAGQSNDDVVDAEFEEVKDDKK) are disordered. Acidic residues predominate over residues 624-638 (DVVDAEFEEVKDDKK).

It belongs to the heat shock protein 70 family.

Functionally, acts as a chaperone. The chain is Chaperone protein DnaK from Shewanella denitrificans (strain OS217 / ATCC BAA-1090 / DSM 15013).